A 331-amino-acid chain; its full sequence is 6-phosphogluconolactonase (331 aa).

Belongs to the cycloisomerase 2 family.

It carries out the reaction 6-phospho-D-glucono-1,5-lactone + H2O = 6-phospho-D-gluconate + H(+). Its pathway is carbohydrate degradation; pentose phosphate pathway; D-ribulose 5-phosphate from D-glucose 6-phosphate (oxidative stage): step 2/3. Its function is as follows. Catalyzes the hydrolysis of 6-phosphogluconolactone to 6-phosphogluconate. This Salmonella typhi protein is 6-phosphogluconolactonase.